The primary structure comprises 914 residues: MNSPDEHNGRRRFLQFSAAALASAAASPSLWAFSKIQPIEDPLKDYPYRDWEDLYRKEWTWDSVGVMTHSNGCVAGCAWNVFVKNGIPMREEQISKYPQLPGIPDMNPRGCQKGAVYCSWSKQPDHIKWPLKRVGERGERKWKRISWDEALTEIADKIIDTTVKRGPGNIYIPKRPFAVITNTAYTRMTKLLGAISPDATSMTGDLYTGIQTVRVPASTVSTFDDWFTSDLILMWHKNPIVTRIPDAHFLMEARYNGARLVNISADYNPSSIHSDLFVPVTSGTDSHLAAALVNVLIAGKHYKADYLKEQTALPFLVRTDNGKFLREKDFKADGSDQVFYVWDTKAGKAVLAPGSMGSKDKTLKLGTIDPALEGNFETHGIKVTTVFERLKAEITPYTPEATQATTGVHPSVVRQLAGWIAECKALRILDGYNNQKHFDGFQCGRLKILILTLIGHHGTTGSIDTTFEGWRLEGNSELGTVKGKPGRSVSAVLAQWVWGEQYQRSKDYFNDAQLREELGFGVDEMESMRKESEANGWMPNWQSIKEPVVSITGGINMFATSNGYQHLRDNFLKRCELNVVVDFRLNSGAMYADIVLPAAENTEKLDIRETSVTRFIHAFGQPVKPMYERKTDWQIMVALAAKIQERAKARGIARVDDPEIKSGIDFDKIYDEFTMNGKVVTDEQAVRFVMDNSKALGPGTYEEVMKNGFVAVGPSAGKTGPVPKDKPYRPFTVNVTDKKPYGTLTGRLQFYVDHDWFQRLGATVPKPQYRGGVLGPKKYPFVRNSPHARWGVHSFARTEQWMLRHQRGEPDVRMSPKAMAAKGIKDGDMVRIFNDSGEFFAVVKAMPALPDNMLFTEHGWEQYQYKNMTHYNMVSSELINPLELVGGYGHIKYTSGGFNPNRIFYETTVDVEKA.

Positions 1–32 form a signal peptide, tat-type signal; it reads MNSPDEHNGRRRFLQFSAAALASAAASPSLWA. Residues 62–125 enclose the 4Fe-4S Mo/W bis-MGD-type domain; sequence DSVGVMTHSN…VYCSWSKQPD (64 aa). The [4Fe-4S] cluster site is built by histidine 69, cysteine 73, cysteine 77, and cysteine 111. A Mo-bis(molybdopterin guanine dinucleotide)-binding site is contributed by aspartate 205.

The protein belongs to the prokaryotic molybdopterin-containing oxidoreductase family. In terms of assembly, heterotrimer of alpha, beta and gamma subunits. Requires [4Fe-4S] cluster as cofactor. The cofactor is Mo-bis(molybdopterin guanine dinucleotide). Post-translationally, predicted to be exported by the Tat system. The position of the signal peptide cleavage has not been experimentally proven.

It localises to the periplasm. The enzyme catalyses chlorate + AH2 = chlorite + A + H2O. Terminal reductase that allows anaerobic growth on chlorate as the sole respiratory oxidant. This chain is Chlorate reductase subunit alpha (clrA), found in Ideonella dechloratans.